The sequence spans 205 residues: Guanylate kinase (205 aa).

The Guanylate kinase-like domain maps to 5–184 (GLLIVLSGPS…AVQKIKGIVE (180 aa)). Residue 12–19 (GPSGVGKG) participates in ATP binding.

Belongs to the guanylate kinase family.

It is found in the cytoplasm. It carries out the reaction GMP + ATP = GDP + ADP. Its function is as follows. Essential for recycling GMP and indirectly, cGMP. The polypeptide is Guanylate kinase (Listeria monocytogenes serotype 4b (strain F2365)).